The following is a 503-amino-acid chain: Probable cytosol aminopeptidase (503 aa).

Residues Lys270 and Asp275 each coordinate Mn(2+). Lys282 is a catalytic residue. Asp293, Asp352, and Glu354 together coordinate Mn(2+). Residue Arg356 is part of the active site.

This sequence belongs to the peptidase M17 family. It depends on Mn(2+) as a cofactor.

The protein localises to the cytoplasm. The catalysed reaction is Release of an N-terminal amino acid, Xaa-|-Yaa-, in which Xaa is preferably Leu, but may be other amino acids including Pro although not Arg or Lys, and Yaa may be Pro. Amino acid amides and methyl esters are also readily hydrolyzed, but rates on arylamides are exceedingly low.. It carries out the reaction Release of an N-terminal amino acid, preferentially leucine, but not glutamic or aspartic acids.. Presumably involved in the processing and regular turnover of intracellular proteins. Catalyzes the removal of unsubstituted N-terminal amino acids from various peptides. The chain is Probable cytosol aminopeptidase from Serratia proteamaculans (strain 568).